The chain runs to 88 residues: ATP synthase F(0) complex subunit f, mitochondrial (88 aa).

Residue alanine 2 is modified to N-acetylalanine. Phosphoserine is present on serine 3. The residue at position 16 (lysine 16) is an N6-acetyllysine. The helical transmembrane segment at 62 to 79 (MVLAAYVVFSYCISYKEL) threads the bilayer.

Belongs to the ATPase F chain family. Component of the ATP synthase complex composed at least of ATP5F1A/subunit alpha, ATP5F1B/subunit beta, ATP5MC1/subunit c (homooctomer), MT-ATP6/subunit a, MT-ATP8/subunit 8, ATP5ME/subunit e, ATP5MF/subunit f, ATP5MG/subunit g, ATP5MK/subunit k, ATP5MJ/subunit j, ATP5F1C/subunit gamma, ATP5F1D/subunit delta, ATP5F1E/subunit epsilon, ATP5PF/subunit F6, ATP5PB/subunit b, ATP5PD/subunit d, ATP5PO/subunit OSCP. ATP synthase complex consists of a soluble F(1) head domain (subunits alpha(3) and beta(3)) - the catalytic core - and a membrane F(0) domain - the membrane proton channel (subunits c, a, 8, e, f, g, k and j). These two domains are linked by a central stalk (subunits gamma, delta, and epsilon) rotating inside the F1 region and a stationary peripheral stalk (subunits F6, b, d, and OSCP).

The protein localises to the mitochondrion. It is found in the mitochondrion inner membrane. Its function is as follows. Subunit f, of the mitochondrial membrane ATP synthase complex (F(1)F(0) ATP synthase or Complex V) that produces ATP from ADP in the presence of a proton gradient across the membrane which is generated by electron transport complexes of the respiratory chain. ATP synthase complex consist of a soluble F(1) head domain - the catalytic core - and a membrane F(1) domain - the membrane proton channel. These two domains are linked by a central stalk rotating inside the F(1) region and a stationary peripheral stalk. During catalysis, ATP synthesis in the catalytic domain of F(1) is coupled via a rotary mechanism of the central stalk subunits to proton translocation. In vivo, can only synthesize ATP although its ATP hydrolase activity can be activated artificially in vitro. Part of the complex F(0) domain. This Mus musculus (Mouse) protein is ATP synthase F(0) complex subunit f, mitochondrial.